A 177-amino-acid polypeptide reads, in one-letter code: Cytochrome c oxidase assembly protein CtaG (177 aa).

Over methionine 1–threonine 8 the chain is Cytoplasmic. Residues isoleucine 9–leucine 29 traverse the membrane as a helical; Signal-anchor for type II membrane protein segment. Residues tyrosine 30–lysine 177 lie on the Periplasmic side of the membrane.

It belongs to the COX11/CtaG family.

The protein localises to the cell inner membrane. In terms of biological role, exerts its effect at some terminal stage of cytochrome c oxidase synthesis, probably by being involved in the insertion of the copper B into subunit I. This Ehrlichia ruminantium (strain Gardel) protein is Cytochrome c oxidase assembly protein CtaG.